The following is a 512-amino-acid chain: Cytochrome P450 1A2 (512 aa).

O-linked (GlcNAc) serine glycosylation occurs at serine 65. Phenylalanine 222 contacts substrate. Cysteine 454 is a binding site for heme.

The protein belongs to the cytochrome P450 family. Interacts with PGRMC1; the interaction requires PGRMC1 homodimerization. Heme is required as a cofactor.

Its subcellular location is the endoplasmic reticulum membrane. It localises to the microsome membrane. It catalyses the reaction an organic molecule + reduced [NADPH--hemoprotein reductase] + O2 = an alcohol + oxidized [NADPH--hemoprotein reductase] + H2O + H(+). It carries out the reaction 17beta-estradiol + reduced [NADPH--hemoprotein reductase] + O2 = 2-hydroxy-17beta-estradiol + oxidized [NADPH--hemoprotein reductase] + H2O + H(+). The enzyme catalyses 17beta-estradiol + reduced [NADPH--hemoprotein reductase] + O2 = 4-hydroxy-17beta-estradiol + oxidized [NADPH--hemoprotein reductase] + H2O + H(+). The catalysed reaction is estrone + reduced [NADPH--hemoprotein reductase] + O2 = 2-hydroxyestrone + oxidized [NADPH--hemoprotein reductase] + H2O + H(+). It catalyses the reaction estrone + reduced [NADPH--hemoprotein reductase] + O2 = 4-hydroxyestrone + oxidized [NADPH--hemoprotein reductase] + H2O + H(+). It carries out the reaction cholesterol + reduced [NADPH--hemoprotein reductase] + O2 = 25-hydroxycholesterol + oxidized [NADPH--hemoprotein reductase] + H2O + H(+). The enzyme catalyses all-trans-retinol + reduced [NADPH--hemoprotein reductase] + O2 = all-trans-retinal + oxidized [NADPH--hemoprotein reductase] + 2 H2O + H(+). The catalysed reaction is all-trans-retinal + reduced [NADPH--hemoprotein reductase] + O2 = all-trans-retinoate + oxidized [NADPH--hemoprotein reductase] + H2O + 2 H(+). It catalyses the reaction (5Z,8Z,11Z,14Z)-eicosatetraenoate + reduced [NADPH--hemoprotein reductase] + O2 = (14R,15S)-epoxy-(5Z,8Z,11Z)-eicosatrienoate + oxidized [NADPH--hemoprotein reductase] + H2O + H(+). It carries out the reaction (5Z,8Z,11Z,14Z)-eicosatetraenoate + reduced [NADPH--hemoprotein reductase] + O2 = (14S,15R)-epoxy-(5Z,8Z,11Z)-eicosatrienoate + oxidized [NADPH--hemoprotein reductase] + H2O + H(+). The enzyme catalyses (5Z,8Z,11Z,14Z,17Z)-eicosapentaenoate + reduced [NADPH--hemoprotein reductase] + O2 = (17R,18S)-epoxy-(5Z,8Z,11Z,14Z)-eicosatetraenoate + oxidized [NADPH--hemoprotein reductase] + H2O + H(+). The catalysed reaction is (4Z,7Z,10Z,13Z,16Z,19Z)-docosahexaenoate + reduced [NADPH--hemoprotein reductase] + O2 = (19R,20S)-epoxy-(4Z,7Z,10Z,13Z,16Z)-docosapentaenoate + oxidized [NADPH--hemoprotein reductase] + H2O + H(+). It catalyses the reaction (5S)-hydroperoxy-(6E,8Z,11Z,14Z)-eicosatetraenoate = 5-oxo-(6E,8Z,11Z,14Z)-eicosatetraenoate + H2O. It carries out the reaction (12S)-hydroperoxy-(5Z,8Z,10E,14Z)-eicosatetraenoate = 12-oxo-(5Z,8Z,10E,14Z)-eicosatetraenoate + H2O. The enzyme catalyses (15S)-hydroperoxy-(5Z,8Z,11Z,13E)-eicosatetraenoate = 15-oxo-(5Z,8Z,11Z,13E)-eicosatetraenoate + H2O. The catalysed reaction is (13S)-hydroperoxy-(9Z,11E)-octadecadienoate = 13-oxo-(9Z,11E)-octadecadienoate + H2O. It catalyses the reaction (5Z,8Z,11Z,14Z)-eicosatetraenoate + reduced [NADPH--hemoprotein reductase] + O2 = 13-hydroxy-(5Z,8Z,11Z,14Z)-eicosatetraenoate + oxidized [NADPH--hemoprotein reductase] + H2O + H(+). It carries out the reaction (5Z,8Z,11Z,14Z)-eicosatetraenoate + reduced [NADPH--hemoprotein reductase] + O2 = 19-hydroxy-(5Z,8Z,11Z,14Z)-eicosatetraenoate + oxidized [NADPH--hemoprotein reductase] + H2O + H(+). The enzyme catalyses (9Z,12Z)-octadecadienoate + reduced [NADPH--hemoprotein reductase] + O2 = 11-hydroxy-(9Z,12Z)-octadecadienoate + oxidized [NADPH--hemoprotein reductase] + H2O + H(+). It participates in cofactor metabolism; retinol metabolism. The protein operates within steroid metabolism; cholesterol metabolism. It functions in the pathway lipid metabolism; arachidonate metabolism. Its function is as follows. A cytochrome P450 monooxygenase involved in the metabolism of various endogenous substrates, including fatty acids, steroid hormones and vitamins. Mechanistically, uses molecular oxygen inserting one oxygen atom into a substrate, and reducing the second into a water molecule, with two electrons provided by NADPH via cytochrome P450 reductase (NADPH--hemoprotein reductase). Catalyzes the hydroxylation of carbon-hydrogen bonds. Exhibits high catalytic activity for the formation of hydroxyestrogens from estrone (E1) and 17beta-estradiol (E2), namely 2-hydroxy E1 and E2. Metabolizes cholesterol toward 25-hydroxycholesterol, a physiological regulator of cellular cholesterol homeostasis. May act as a major enzyme for all-trans retinoic acid biosynthesis in the liver. Catalyzes two successive oxidative transformation of all-trans retinol to all-trans retinal and then to the active form all-trans retinoic acid. Primarily catalyzes stereoselective epoxidation of the last double bond of polyunsaturated fatty acids (PUFA), displaying a strong preference for the (R,S) stereoisomer. Catalyzes bisallylic hydroxylation and omega-1 hydroxylation of PUFA. May also participate in eicosanoids metabolism by converting hydroperoxide species into oxo metabolites (lipoxygenase-like reaction, NADPH-independent). Plays a role in the oxidative metabolism of xenobiotics. Catalyzes the N-hydroxylation of heterocyclic amines and the O-deethylation of phenacetin. Metabolizes caffeine via N3-demethylation. This is Cytochrome P450 1A2 (CYP1A2) from Felis catus (Cat).